We begin with the raw amino-acid sequence, 454 residues long: GTPase Der (454 aa).

EngA-type G domains follow at residues Pro-4–Asp-168 and Met-178–Gln-352. GTP is bound by residues Gly-10 to Ser-17, Asp-57 to Met-61, Asn-120 to Asp-123, Gly-184 to Ser-191, Asp-231 to Leu-235, and Asn-296 to Asp-299. The region spanning Ser-353 to Ser-437 is the KH-like domain.

This sequence belongs to the TRAFAC class TrmE-Era-EngA-EngB-Septin-like GTPase superfamily. EngA (Der) GTPase family. As to quaternary structure, associates with the 50S ribosomal subunit.

In terms of biological role, GTPase that plays an essential role in the late steps of ribosome biogenesis. The polypeptide is GTPase Der (Rhodopirellula baltica (strain DSM 10527 / NCIMB 13988 / SH1)).